Here is a 96-residue protein sequence, read N- to C-terminus: Co-chaperonin GroES (96 aa).

The protein belongs to the GroES chaperonin family. In terms of assembly, heptamer of 7 subunits arranged in a ring. Interacts with the chaperonin GroEL.

It localises to the cytoplasm. Its function is as follows. Together with the chaperonin GroEL, plays an essential role in assisting protein folding. The GroEL-GroES system forms a nano-cage that allows encapsulation of the non-native substrate proteins and provides a physical environment optimized to promote and accelerate protein folding. GroES binds to the apical surface of the GroEL ring, thereby capping the opening of the GroEL channel. This chain is Co-chaperonin GroES, found in Holospora obtusa.